Consider the following 224-residue polypeptide: GTP-binding protein RHO3 (224 aa).

Position 22 to 29 (22 to 29) interacts with GTP; sequence GDGACGKT. The short motif at 44-52 is the Effector region element; it reads YEPTVFENY. Residues 69–73 and 127–130 contribute to the GTP site; these read DTAGQ and LKCD. Residues 205 to 224 form a disordered region; the sequence is TPKGARDSAPEAESSSCTIM. At Cys-221 the chain carries Cysteine methyl ester. Cys-221 is lipidated: S-geranylgeranyl cysteine. A propeptide spans 222–224 (removed in mature form); that stretch reads TIM.

Belongs to the small GTPase superfamily. Rho family.

It is found in the cell membrane. In terms of biological role, involved in the regulation of actin polarization. Rho proteins are required for distinct steps during polarized hyphal growth of A.gossypii. This Eremothecium gossypii (strain ATCC 10895 / CBS 109.51 / FGSC 9923 / NRRL Y-1056) (Yeast) protein is GTP-binding protein RHO3 (RHO3).